The chain runs to 72 residues: Protein kish-A (72 aa).

Residues 1-26 (MSAIFNFQSLLTVILLLICTCAYIRS) form the signal peptide. Topologically, residues 27-53 (LAPSLLDKNKTGLLGIFWKCARIGERK) are extracellular. The N-linked (GlcNAc...) asparagine glycan is linked to Asn35. The chain crosses the membrane as a helical span at residues 54–71 (SPYVAVCCVVMAFSILFV). A topological domain (cytoplasmic) is located at residue Gln72.

It belongs to the KISH family.

Its subcellular location is the golgi apparatus membrane. In terms of biological role, involved in the early part of the secretory pathway. This is Protein kish-A (TMEM167A) from Gallus gallus (Chicken).